A 599-amino-acid chain; its full sequence is Elongation factor 4 (599 aa).

Residues lysine 2–glutamate 184 form the tr-type G domain. Residues aspartate 14–threonine 19 and asparagine 131–aspartate 134 contribute to the GTP site.

This sequence belongs to the TRAFAC class translation factor GTPase superfamily. Classic translation factor GTPase family. LepA subfamily.

The protein localises to the cell inner membrane. It carries out the reaction GTP + H2O = GDP + phosphate + H(+). Required for accurate and efficient protein synthesis under certain stress conditions. May act as a fidelity factor of the translation reaction, by catalyzing a one-codon backward translocation of tRNAs on improperly translocated ribosomes. Back-translocation proceeds from a post-translocation (POST) complex to a pre-translocation (PRE) complex, thus giving elongation factor G a second chance to translocate the tRNAs correctly. Binds to ribosomes in a GTP-dependent manner. The sequence is that of Elongation factor 4 from Citrobacter koseri (strain ATCC BAA-895 / CDC 4225-83 / SGSC4696).